We begin with the raw amino-acid sequence, 409 residues long: MQILTLISWDFKRNNNFFNQAVLNPYEYWADILEKNGISRYVILLTCNRVEIYLRAGFPEDLEAMKPNVLHDEEAIKHLMEVSSGLDSMSLGENEILKQVKEAYELSVRNGKVDKVLSLIFQKAIFVGKKVRSETEISRGKVSVPSIVYDILSSRVVQKVLIIGNGMIAGEIAPYLSGKFEVTIAGRNIDHVKDLASKYNYSYTTINDLHELIMRNDAIISATSSKTPIIRREEMVEGKLYIDLGNPRNIEDKPGADIITIDDIYSVSNRNGSARMESVDEARRIIEIEMASLMNKIKDVMIDEIFADFYKFAVVVQKMEIEKFSRMHPEIPASDVEAFAHSMINKVMNIPVMTLKSVARSQSNQDFSRIFSKFYDNFSDLVSAALQSYEGRQDTQSLRDRTRRLLQRS.

Residues 46–49 (TCNR), Ser88, 93–95 (ENE), and Gln99 contribute to the substrate site. Cys47 acts as the Nucleophile in catalysis. Residue 164-169 (GNGMIA) participates in NADP(+) binding.

The protein belongs to the glutamyl-tRNA reductase family. In terms of assembly, homodimer.

The enzyme catalyses (S)-4-amino-5-oxopentanoate + tRNA(Glu) + NADP(+) = L-glutamyl-tRNA(Glu) + NADPH + H(+). The protein operates within porphyrin-containing compound metabolism; protoporphyrin-IX biosynthesis; 5-aminolevulinate from L-glutamyl-tRNA(Glu): step 1/2. Functionally, catalyzes the NADPH-dependent reduction of glutamyl-tRNA(Glu) to glutamate 1-semialdehyde (GSA). The chain is Glutamyl-tRNA reductase from Thermoplasma acidophilum (strain ATCC 25905 / DSM 1728 / JCM 9062 / NBRC 15155 / AMRC-C165).